Here is a 441-residue protein sequence, read N- to C-terminus: Signal recognition particle 54 kDa protein (441 aa).

Residues 103-110, 184-188, and 244-247 each bind GTP; these read GVQGSGKT, DTAGR, and TKMD.

It belongs to the GTP-binding SRP family. SRP54 subfamily. In terms of assembly, part of the signal recognition particle protein translocation system, which is composed of SRP and FtsY. Archaeal SRP consists of a 7S RNA molecule of 300 nucleotides and two protein subunits: SRP54 and SRP19.

It is found in the cytoplasm. The catalysed reaction is GTP + H2O = GDP + phosphate + H(+). In terms of biological role, involved in targeting and insertion of nascent membrane proteins into the cytoplasmic membrane. Binds to the hydrophobic signal sequence of the ribosome-nascent chain (RNC) as it emerges from the ribosomes. The SRP-RNC complex is then targeted to the cytoplasmic membrane where it interacts with the SRP receptor FtsY. This is Signal recognition particle 54 kDa protein from Aeropyrum pernix (strain ATCC 700893 / DSM 11879 / JCM 9820 / NBRC 100138 / K1).